Consider the following 211-residue polypeptide: Ribosome maturation factor RimM (211 aa).

Positions 111-182 (PDAWYDHQLV…TLVVTPPLGL (72 aa)) constitute a PRC barrel domain. The interval 184-211 (EEIPDETPTAEPTPAEAAEPAPEGDDAR) is disordered. Residues 189-204 (ETPTAEPTPAEAAEPA) show a composition bias toward low complexity.

This sequence belongs to the RimM family. In terms of assembly, binds ribosomal protein uS19.

The protein localises to the cytoplasm. Functionally, an accessory protein needed during the final step in the assembly of 30S ribosomal subunit, possibly for assembly of the head region. Essential for efficient processing of 16S rRNA. May be needed both before and after RbfA during the maturation of 16S rRNA. It has affinity for free ribosomal 30S subunits but not for 70S ribosomes. This is Ribosome maturation factor RimM from Clavibacter michiganensis subsp. michiganensis (strain NCPPB 382).